The primary structure comprises 473 residues: ATP synthase subunit beta (473 aa).

Residue 153–160 (GGAGVGKT) coordinates ATP.

The protein belongs to the ATPase alpha/beta chains family. In terms of assembly, F-type ATPases have 2 components, CF(1) - the catalytic core - and CF(0) - the membrane proton channel. CF(1) has five subunits: alpha(3), beta(3), gamma(1), delta(1), epsilon(1). CF(0) has three main subunits: a(1), b(2) and c(9-12). The alpha and beta chains form an alternating ring which encloses part of the gamma chain. CF(1) is attached to CF(0) by a central stalk formed by the gamma and epsilon chains, while a peripheral stalk is formed by the delta and b chains.

It is found in the cell inner membrane. The catalysed reaction is ATP + H2O + 4 H(+)(in) = ADP + phosphate + 5 H(+)(out). Produces ATP from ADP in the presence of a proton gradient across the membrane. The catalytic sites are hosted primarily by the beta subunits. In Rickettsia akari (strain Hartford), this protein is ATP synthase subunit beta.